The primary structure comprises 466 residues: Transcription factor eupR (466 aa).

Polar residues predominate over residues M1–S18. The segment at M1 to R22 is disordered. A DNA-binding region (zn(2)-C6 fungal-type) is located at residues C32–C62.

The protein localises to the nucleus. In terms of biological role, transcription factor; part of the gene cluster that mediates the biosynthesis of eupenifeldin, a bistropolone meroterpenoid that acts as an antitumor agent. The polypeptide is Transcription factor eupR (Phoma sp).